Reading from the N-terminus, the 211-residue chain is Holliday junction branch migration complex subunit RuvA (211 aa).

The segment at 1–63 is domain I; it reads MIASLRGTVI…EDSQTLYVFK (63 aa). The tract at residues 64 to 142 is domain II; it reads DADEKRAFAT…DLGEIADTGA (79 aa). Residues 143–157 are flexible linker; sequence VGAAGAVGDGGDGQA. Residues 158-211 form a domain III region; the sequence is VAPDVREQVLEALVGLGFTESKAGTTIEAVLSQWSAPQAPDASGLLRASLAAIK.

It belongs to the RuvA family. In terms of assembly, homotetramer. Forms an RuvA(8)-RuvB(12)-Holliday junction (HJ) complex. HJ DNA is sandwiched between 2 RuvA tetramers; dsDNA enters through RuvA and exits via RuvB. An RuvB hexamer assembles on each DNA strand where it exits the tetramer. Each RuvB hexamer is contacted by two RuvA subunits (via domain III) on 2 adjacent RuvB subunits; this complex drives branch migration. In the full resolvosome a probable DNA-RuvA(4)-RuvB(12)-RuvC(2) complex forms which resolves the HJ.

The protein localises to the cytoplasm. Its function is as follows. The RuvA-RuvB-RuvC complex processes Holliday junction (HJ) DNA during genetic recombination and DNA repair, while the RuvA-RuvB complex plays an important role in the rescue of blocked DNA replication forks via replication fork reversal (RFR). RuvA specifically binds to HJ cruciform DNA, conferring on it an open structure. The RuvB hexamer acts as an ATP-dependent pump, pulling dsDNA into and through the RuvAB complex. HJ branch migration allows RuvC to scan DNA until it finds its consensus sequence, where it cleaves and resolves the cruciform DNA. The chain is Holliday junction branch migration complex subunit RuvA from Corynebacterium jeikeium (strain K411).